The chain runs to 1044 residues: Disease resistance protein PIK6-NP (1044 aa).

The structured coiled coil (CC) domain stretch occupies residues 3-184 (LAVGASEATM…PQIVSIKEPV (182 aa)). The 357-residue stretch at 187–543 (KTVMENLEKW…IAEGFATEKQ (357 aa)) folds into the NB-ARC domain. Residues 258–302 (QVSKQEEAGGSTESSSRDENTREPQGSSSTSSREENTAESGTKRM) are disordered. LRR repeat units lie at residues 635 to 657 (LAQV…SFNY), 682 to 705 (MLVL…IEKL), and 706 to 728 (EYLE…VGQL). Residues 737–771 (GNKNTRKGLRLPQEKRNKAMKNPSPQGKTKEPAEK) are disordered. 6 LRR repeats span residues 808-834 (LTGL…LLSS), 840-862 (SCGL…LYNM), 866-888 (PRYL…ITSI), 889-911 (TTLN…ILRN), 935-958 (KGIL…EFKS), and 980-1004 (MPAL…ILEN).

Belongs to the disease resistance NB-LRR family.

In terms of biological role, probable disease resistance protein. Resistance proteins guard the plant against pathogens that contain an appropriate avirulence protein via an indirect interaction with this avirulence protein. That triggers a defense system including the hypersensitive response, which restricts the pathogen growth. At the opposite of cultivar Kusabue, the cultivar Nipponbare doesn't recognize the effector avirulence protein AVR-Pik from M.oryzae. In Oryza sativa subsp. japonica (Rice), this protein is Disease resistance protein PIK6-NP.